A 188-amino-acid chain; its full sequence is Protein SYC1 (188 aa).

As to quaternary structure, component of the cleavage and polyadenylation factor (CPF) complex, which is composed of at least PTI1, SYC1, SSU72, GLC7, MPE1, REF2, PFS2, PTA1, YSH1/BRR5, SWD2, CFT2/YDH1, YTH1, CFT1/YHH1, FIP1 and PAP1. Component of the APT complex, which is a subcomplex of CPF, and is composed of PTI1, SYC1, SSU72, GLC7, REF2, PTA1 and SWD2.

It is found in the nucleus. In terms of biological role, component of the cleavage and polyadenylation factor (CPF) complex, which plays a key role in polyadenylation-dependent pre-mRNA 3'-end formation and cooperates with cleavage factors including the CFIA complex and NAB4/CFIB. Component of the APT complex, which may be involved in polyadenylation-independent transcript 3'-end formation, including snoRNAs and snRNAs. This chain is Protein SYC1 (SYC1), found in Saccharomyces cerevisiae (strain ATCC 204508 / S288c) (Baker's yeast).